The chain runs to 250 residues: MPDNASAQQPGQPAQGPNEHYHQPLNQPRALRIGVAGPVGTGKSSILATLCRELAGELSMAVVTNDIYTDEDARFLRSAGVLPTERIRAVETGACPHTAIRDDVSANLDAVEDLEEAYGPLDLVLIESGGDNLTATFSPALADAQLFSIDVAGGGDVARKGGPGITGADLLVINKTDLAPHVEVDVTAMVADAERARDGLPVLALSKHDPESIARLADWVRAVLVRHRSGTHVPTDPGPMAPHSHSHDGS.

Residues Met-1–Pro-24 are disordered. Residues Ala-7–Pro-17 are compositionally biased toward low complexity. Gly-37 to Ser-44 contributes to the GTP binding site. The tract at residues Gly-230 to Ser-250 is disordered.

Belongs to the SIMIBI class G3E GTPase family. UreG subfamily. As to quaternary structure, homodimer. UreD, UreF and UreG form a complex that acts as a GTP-hydrolysis-dependent molecular chaperone, activating the urease apoprotein by helping to assemble the nickel containing metallocenter of UreC. The UreE protein probably delivers the nickel.

The protein localises to the cytoplasm. Functionally, facilitates the functional incorporation of the urease nickel metallocenter. This process requires GTP hydrolysis, probably effectuated by UreG. The polypeptide is Urease accessory protein UreG 3 (Streptomyces griseus subsp. griseus (strain JCM 4626 / CBS 651.72 / NBRC 13350 / KCC S-0626 / ISP 5235)).